A 299-amino-acid polypeptide reads, in one-letter code: Ribosomal protein L11 methyltransferase (299 aa).

S-adenosyl-L-methionine is bound by residues Thr144, Gly165, Asp187, and Asn229.

Belongs to the methyltransferase superfamily. PrmA family.

It localises to the cytoplasm. The catalysed reaction is L-lysyl-[protein] + 3 S-adenosyl-L-methionine = N(6),N(6),N(6)-trimethyl-L-lysyl-[protein] + 3 S-adenosyl-L-homocysteine + 3 H(+). Methylates ribosomal protein L11. In Teredinibacter turnerae (strain ATCC 39867 / T7901), this protein is Ribosomal protein L11 methyltransferase.